Reading from the N-terminus, the 146-residue chain is VQLSGEEKAAVLALWDKVNEEEVGGEALGRLLVVYPWTQRFFDSFGDLSNPGAVMGNPKVKAHGKKVLHSFGEGVHHLDNLKGTFAALSELHCDKLHVDPENFRLLGNVLVVVLARHFGKDFTPELQASYQKVVAGVANALAHKYH.

V1 bears the N-acetylvaline mark. The Globin domain occupies 2-146 (QLSGEEKAAV…VANALAHKYH (145 aa)). S44 bears the Phosphoserine mark. At K59 the chain carries N6-acetyllysine. A heme b-binding site is contributed by H63. K82 carries the N6-acetyllysine modification. Heme b is bound at residue H92. C93 is subject to S-nitrosocysteine. At K144 the chain carries N6-acetyllysine.

This sequence belongs to the globin family. Heterotetramer of two alpha chains and two beta chains. Red blood cells.

Involved in oxygen transport from the lung to the various peripheral tissues. In Equus caballus (Horse), this protein is Hemoglobin subunit beta (HBB).